The primary structure comprises 550 residues: Proteasome-associated ATPase (550 aa).

A coiled-coil region spans residues 9–48; it reads EELARRVASLSAQNERLAQILVEARSKIVGLQQQIDDLAQ. 233–238 lines the ATP pocket; it reads GCGKTL. Positions 528 to 550 are disordered; sequence KGEGKNPTPAKAIETPHNTGPYL. Positions 549 to 550 are docks into pockets in the proteasome alpha-ring; it reads YL.

Belongs to the AAA ATPase family. Homohexamer. Assembles into a hexameric ring structure that caps the 20S proteasome core. Strongly interacts with the prokaryotic ubiquitin-like protein Pup through a hydrophobic interface; the interacting region of ARC lies in its N-terminal coiled-coil domain. There is one Pup binding site per ARC hexamer ring. Upon ATP-binding, the C-terminus of ARC interacts with the alpha-rings of the proteasome core, possibly by binding to the intersubunit pockets.

The protein operates within protein degradation; proteasomal Pup-dependent pathway. Functionally, ATPase which is responsible for recognizing, binding, unfolding and translocation of pupylated proteins into the bacterial 20S proteasome core particle. May be essential for opening the gate of the 20S proteasome via an interaction with its C-terminus, thereby allowing substrate entry and access to the site of proteolysis. Thus, the C-termini of the proteasomal ATPase may function like a 'key in a lock' to induce gate opening and therefore regulate proteolysis. The chain is Proteasome-associated ATPase from Jonesia denitrificans (strain ATCC 14870 / DSM 20603 / BCRC 15368 / CIP 55.134 / JCM 11481 / NBRC 15587 / NCTC 10816 / Prevot 55134) (Listeria denitrificans).